Reading from the N-terminus, the 965-residue chain is Valine--tRNA ligase (965 aa).

Residues 1–12 are compositionally biased toward polar residues; it reads MEKTPATQTQAE. Residues 1–23 form a disordered region; sequence MEKTPATQTQAEPSLDKTYNPKE. Residues 56–66 carry the 'HIGH' region motif; the sequence is PNVTGSLHMGH. The short motif at 568-572 is the 'KMSKS' region element; that stretch reads KMSKS. Lysine 571 provides a ligand contact to ATP. A coiled-coil region spans residues 893 to 960; sequence MAGLVDKEAE…SKEKLLAQKE (68 aa).

This sequence belongs to the class-I aminoacyl-tRNA synthetase family. ValS type 1 subfamily. In terms of assembly, monomer.

Its subcellular location is the cytoplasm. The enzyme catalyses tRNA(Val) + L-valine + ATP = L-valyl-tRNA(Val) + AMP + diphosphate. Functionally, catalyzes the attachment of valine to tRNA(Val). As ValRS can inadvertently accommodate and process structurally similar amino acids such as threonine, to avoid such errors, it has a 'posttransfer' editing activity that hydrolyzes mischarged Thr-tRNA(Val) in a tRNA-dependent manner. The protein is Valine--tRNA ligase of Photorhabdus laumondii subsp. laumondii (strain DSM 15139 / CIP 105565 / TT01) (Photorhabdus luminescens subsp. laumondii).